Here is a 709-residue protein sequence, read N- to C-terminus: Kelch domain-containing protein STK_09390 (709 aa).

Residues 1 to 22 (MKRNTLLALVLVILIFPTLSTA) form the signal peptide. 6 Kelch repeats span residues 49–94 (KIFL…VCNN), 96–140 (LYVV…SYDY), 141–192 (KIYV…FNGS), 193–240 (ALFV…YYNG), 242–288 (MYLV…VQIG), and 290–340 (KLII…DTNA). Fibronectin type-III domains lie at 315–405 (PPPK…VPNP), 406–488 (PIIK…ASKA), 489–566 (NLTV…IYYI), and 568–643 (PASP…NDVR).

This is Kelch domain-containing protein STK_09390 from Sulfurisphaera tokodaii (strain DSM 16993 / JCM 10545 / NBRC 100140 / 7) (Sulfolobus tokodaii).